The sequence spans 160 residues: Eukaryotic translation initiation factor 5A (160 aa).

A compositionally biased stretch (basic and acidic residues) spans M1–A13. The interval M1–P22 is disordered. K53 is subject to Hypusine.

It belongs to the eIF-5A family. Lys-53 undergoes hypusination, a unique post-translational modification that consists in the addition of a butylamino group from spermidine to lysine side chain, leading to the formation of the unusual amino acid hypusine. eIF-5As are the only known proteins to undergo this modification, which is essential for their function.

Its function is as follows. Translation factor that promotes translation elongation and termination, particularly upon ribosome stalling at specific amino acid sequence contexts. Binds between the exit (E) and peptidyl (P) site of the ribosome and promotes rescue of stalled ribosome: specifically required for efficient translation of polyproline-containing peptides as well as other motifs that stall the ribosome. Acts as a ribosome quality control (RQC) cofactor by joining the RQC complex to facilitate peptidyl transfer during CAT tailing step. The protein is Eukaryotic translation initiation factor 5A (TIF5A) of Zea mays (Maize).